The primary structure comprises 102 residues: Small ribosomal subunit protein uS10 (102 aa).

Belongs to the universal ribosomal protein uS10 family. As to quaternary structure, part of the 30S ribosomal subunit.

Its function is as follows. Involved in the binding of tRNA to the ribosomes. The chain is Small ribosomal subunit protein uS10 from Shouchella clausii (strain KSM-K16) (Alkalihalobacillus clausii).